Reading from the N-terminus, the 77-residue chain is Small ribosomal subunit protein uS17 (77 aa).

The protein belongs to the universal ribosomal protein uS17 family. In terms of assembly, part of the 30S ribosomal subunit.

Functionally, one of the primary rRNA binding proteins, it binds specifically to the 5'-end of 16S ribosomal RNA. The protein is Small ribosomal subunit protein uS17 of Rickettsia rickettsii (strain Sheila Smith).